Consider the following 466-residue polypeptide: Arginine biosynthesis bifunctional protein ArgJ, mitochondrial (466 aa).

Positions 194, 223, 234, 321, 461, and 466 each coordinate substrate. The Nucleophile role is filled by Thr234.

It belongs to the ArgJ family. As to quaternary structure, heterodimer of an alpha and a beta chain. The alpha and beta chains are autoproteolytically processed from a single precursor protein within the mitochondrion.

The protein localises to the mitochondrion matrix. The enzyme catalyses N(2)-acetyl-L-ornithine + L-glutamate = N-acetyl-L-glutamate + L-ornithine. It carries out the reaction L-glutamate + acetyl-CoA = N-acetyl-L-glutamate + CoA + H(+). It functions in the pathway amino-acid biosynthesis; L-arginine biosynthesis; L-ornithine and N-acetyl-L-glutamate from L-glutamate and N(2)-acetyl-L-ornithine (cyclic): step 1/1. It participates in amino-acid biosynthesis; L-arginine biosynthesis; N(2)-acetyl-L-ornithine from L-glutamate: step 1/4. Functionally, catalyzes two activities which are involved in the cyclic version of arginine biosynthesis: the synthesis of acetylglutamate from glutamate and acetyl-CoA, and of ornithine by transacetylation between acetylornithine and glutamate. In Aspergillus fumigatus (strain ATCC MYA-4609 / CBS 101355 / FGSC A1100 / Af293) (Neosartorya fumigata), this protein is Arginine biosynthesis bifunctional protein ArgJ, mitochondrial.